Consider the following 197-residue polypeptide: Pyridoxal 5'-phosphate synthase subunit PdxT (197 aa).

53–55 (GES) is an L-glutamine binding site. Cys85 acts as the Nucleophile in catalysis. L-glutamine-binding positions include Arg114 and 142-143 (IR). Active-site charge relay system residues include His179 and Glu181.

It belongs to the glutaminase PdxT/SNO family. As to quaternary structure, in the presence of PdxS, forms a dodecamer of heterodimers. Only shows activity in the heterodimer.

The catalysed reaction is aldehydo-D-ribose 5-phosphate + D-glyceraldehyde 3-phosphate + L-glutamine = pyridoxal 5'-phosphate + L-glutamate + phosphate + 3 H2O + H(+). It catalyses the reaction L-glutamine + H2O = L-glutamate + NH4(+). The protein operates within cofactor biosynthesis; pyridoxal 5'-phosphate biosynthesis. Its function is as follows. Catalyzes the hydrolysis of glutamine to glutamate and ammonia as part of the biosynthesis of pyridoxal 5'-phosphate. The resulting ammonia molecule is channeled to the active site of PdxS. The polypeptide is Pyridoxal 5'-phosphate synthase subunit PdxT (Thermococcus onnurineus (strain NA1)).